The sequence spans 1436 residues: ABC transporter C family member 15 (1436 aa).

Helical transmembrane passes span 8–28 (IINK…IYLY), 129–149 (YIAT…PLIL), 165–185 (IYIG…NMAS), 238–258 (FFQY…IQIL), 261–281 (LGFL…VMLI), 349–369 (IIYW…VLVS), and 373–393 (TYTL…ITIL). Positions 128–412 (NYIATGLFVF…LPDCLHKFIS (285 aa)) constitute an ABC transmembrane type-1 1 domain. Positions 543-766 (ADYQDLLSIN…IDFEMILKEK (224 aa)) constitute an ABC transporter 1 domain. ATP is bound at residue 575–582 (GGVRSGKT). The region spanning 865–1155 (KKYIRMGSSI…FMRQFGELES (291 aa)) is the ABC transmembrane type-1 2 domain. Transmembrane regions (helical) follow at residues 873–893 (SISF…ILLL), 919–939 (LIYL…YLLI), 985–1005 (IDIL…CLVT), 1017–1039 (IAIP…NYSV), 1101–1121 (IGIR…LFSI), and 1127–1147 (GLSA…NWFM). The region spanning 1193–1426 (IEFKNVEIRY…STSRFSKLIK (234 aa)) is the ABC transporter 2 domain. ATP is bound at residue 1227-1234 (GRSGSGKS).

It belongs to the ABC transporter superfamily. ABCC family. Conjugate transporter (TC 3.A.1.208) subfamily.

The protein resides in the membrane. This Dictyostelium discoideum (Social amoeba) protein is ABC transporter C family member 15 (abcC15).